Here is a 103-residue protein sequence, read N- to C-terminus: Protein FMC1 homolog (103 aa).

Belongs to the FMC1 family.

The protein is Protein FMC1 homolog of Nematostella vectensis (Starlet sea anemone).